A 427-amino-acid chain; its full sequence is MESLTLQPIARVDGTINLPGSKSVSNRALLLAALAHGKTVLTNLLDSDDVRYMLNALKALGVSYTLSADRTRCEIIGNGGPLHAKSALELFLGNAGTAMRPLAAALCLGSNDIVLTGEPRMKERPIGHLVDALRLGGAKITYLEQENYPPLRLQGGFTGGNVDVDGSVSSQFLTALLMTAPLAPEDTVIRIKGDLVSKPYIDITLNLMKTFGVEIENQHYQQFVVKGGQSYQSPGTYLVEGDASSASYFLAAAAIKGGTVKVTGIGRNSMQGDIRFADVLEKMGATICWGDDYISCTRGELNAIDMDMNHIPDAAMTIATAALFAKGNTTLRNIYNWRVKETDRLFAMATELRKVGAEVEEGHDFIRITPPEKLKFAEIATYNDHRMAMCFSLVALSDTAVTILDPKCTAKTFPDYFEQLARISQAA.

3-phosphoshikimate-binding residues include K22, S23, and R27. Residue K22 participates in phosphoenolpyruvate binding. 2 residues coordinate phosphoenolpyruvate: G96 and R124. The 3-phosphoshikimate site is built by S169, S170, Q171, S197, D313, N336, and K340. Residue Q171 coordinates phosphoenolpyruvate. D313 functions as the Proton acceptor in the catalytic mechanism. Phosphoenolpyruvate contacts are provided by R344, R386, and K411.

It belongs to the EPSP synthase family. As to quaternary structure, monomer.

It is found in the cytoplasm. It catalyses the reaction 3-phosphoshikimate + phosphoenolpyruvate = 5-O-(1-carboxyvinyl)-3-phosphoshikimate + phosphate. Its pathway is metabolic intermediate biosynthesis; chorismate biosynthesis; chorismate from D-erythrose 4-phosphate and phosphoenolpyruvate: step 6/7. Its function is as follows. Catalyzes the transfer of the enolpyruvyl moiety of phosphoenolpyruvate (PEP) to the 5-hydroxyl of shikimate-3-phosphate (S3P) to produce enolpyruvyl shikimate-3-phosphate and inorganic phosphate. The protein is 3-phosphoshikimate 1-carboxyvinyltransferase of Escherichia coli (strain SMS-3-5 / SECEC).